The chain runs to 307 residues: MYSMLDTDLKSPVQQSNAPNGGPGTPGGKGNASIPDQERVKRPMNAFMVWSRGQRRKMAQENPKMHNSEISKRLGADWKLLSDSEKRPFIDEAKRLRAVHMKEYPDYKYRPRRKTKTLLKKDKYSLPGNLLAPGVSPVASSVGVGQRIDTYAHMNGWTNGAYSLMQDQLGYSQHPGMNSPQMQQIQHRYDMGGLQYSPMMSSAQTYMNAAASTYSMSPAYNQQSSTVMSLGSMGSVVKSEPSSPPPAITSHTQRACLGDLRDMISMYLPPGGDASDPSSLQSSRLHSVHQHYQSAAGPNGTVPLTHI.

Positions 1 to 41 are disordered; that stretch reads MYSMLDTDLKSPVQQSNAPNGGPGTPGGKGNASIPDQERVK. Residues 21-30 are compositionally biased toward gly residues; that stretch reads GGPGTPGGKG. A DNA-binding region (HMG box) is located at residues 40 to 108; it reads VKRPMNAFMV…VHMKEYPDYK (69 aa). Residues 259–270 carry the 9aaTAD motif; sequence DLRDMISMYLPP.

Interacts with ctnnb1.

It localises to the nucleus. Its subcellular location is the cytoplasm. Its function is as follows. Transcription factor with sequence-specific DNA binding activity. Binds to the consensus sequence 5'-[AT][AT]CAA[AT]G-3', showing a preference for 5'-AACAAT-3' and 5'-AACAAAG-3'. Inhibits beta-catenin-mediated dorsal axis specification by binding to sites within the promoter of the beta-catenin-regulated gene nodal5. Maternally derived sox3 acts as a transcriptional repressor of nodal5 and nodal6 to restrict their expression to the vegetal hemisphere of early embryos and thus establish germ layer formation. Acts at multiple points to inhibit nodal signaling, repressing the expression of the other mesoderm-inducing nodal genes nodal, nodal2 and nodal4, and also acting downstream to induce expression of genes including trim33/ectodermin, ema and coco, whose products repress nodal signaling. The sequence is that of Transcription factor Sox-3 from Xenopus tropicalis (Western clawed frog).